We begin with the raw amino-acid sequence, 408 residues long: MTMAFMSVDEQMKILMRGVVDLVSEEELRQKLERSVKTGRPLRVKLGIDPTGKDLTLGHTVPLRKLRDFVECGHQGVLIIGDYTAMVGDPTGRNEARPQLTHAETTANAQRYLEQAARVLDVSKLEIRRNSEWLAPMSFSDVIRLAAKSTVARMLEREDFKKRYEEGRPIFIHEFFYPLMQGTDSVAVQADVELGGTDQKFNLLAGRDLQRDAGQEPQVCLMTPIVEGLDGVQKMSKSLGNYIGLDHTPDEMFGRTMSIPDSLIITYFTYFTDVPQEEIERIEAAMAAGENPMTFKKQLGRAIITTYGGTEEEARLAEERWVAQFSRGEVPEDIPDVVLPAAELPMQAARVLFTAGLAPSLSEARRLIEQGGFTVDGEKVTDPRAELALRPGQVLKAGKRKYGRVVLK.

The 'HIGH' region signature appears at 50 to 59 (PTGKDLTLGH). Residues 234-238 (KMSKS) carry the 'KMSKS' region motif. Lys237 serves as a coordination point for ATP. The S4 RNA-binding domain maps to 346–407 (MQAARVLFTA…GKRKYGRVVL (62 aa)).

This sequence belongs to the class-I aminoacyl-tRNA synthetase family. TyrS type 2 subfamily. Homodimer.

The protein resides in the cytoplasm. It carries out the reaction tRNA(Tyr) + L-tyrosine + ATP = L-tyrosyl-tRNA(Tyr) + AMP + diphosphate + H(+). Its function is as follows. Catalyzes the attachment of tyrosine to tRNA(Tyr) in a two-step reaction: tyrosine is first activated by ATP to form Tyr-AMP and then transferred to the acceptor end of tRNA(Tyr). The polypeptide is Tyrosine--tRNA ligase (Symbiobacterium thermophilum (strain DSM 24528 / JCM 14929 / IAM 14863 / T)).